Consider the following 432-residue polypeptide: Glutamate-1-semialdehyde 2,1-aminomutase 2 (432 aa).

The residue at position 268 (lysine 268) is an N6-(pyridoxal phosphate)lysine.

This sequence belongs to the class-III pyridoxal-phosphate-dependent aminotransferase family. HemL subfamily. In terms of assembly, homodimer. Pyridoxal 5'-phosphate serves as cofactor.

It is found in the cytoplasm. The catalysed reaction is (S)-4-amino-5-oxopentanoate = 5-aminolevulinate. It functions in the pathway porphyrin-containing compound metabolism; protoporphyrin-IX biosynthesis; 5-aminolevulinate from L-glutamyl-tRNA(Glu): step 2/2. The sequence is that of Glutamate-1-semialdehyde 2,1-aminomutase 2 from Listeria monocytogenes serovar 1/2a (strain ATCC BAA-679 / EGD-e).